The sequence spans 581 residues: Leucine-rich repeat-containing protein 47 (581 aa).

7 LRR repeats span residues 78–97 (QLHS…SPEL), 102–123 (ALRV…EGLG), 132–154 (QLQS…ARCA), 156–177 (RLQS…LFRP), 182–204 (LLSE…AHLA), 205–227 (SLKT…ADCP), and 228–248 (KLKE…EKMV). A disordered region spans residues 262 to 301 (AGGRGGRSKGRQEASEKEDRKKRRERKQHRESGEGEEEVA). Residues 271 to 280 (GRQEASEKED) show a composition bias toward basic and acidic residues. Phosphoserine occurs at positions 314, 430, and 519. A coiled-coil region spans residues 401-436 (LGRKEAKAKELVRQLQLEAEEQRKQKKRQSVSGLHR).

This is Leucine-rich repeat-containing protein 47 (Lrrc47) from Mus musculus (Mouse).